Reading from the N-terminus, the 689-residue chain is uncharacterized protein (689 aa).

Residue S566 participates in substrate binding. Y579 functions as the Proton acceptor in the catalytic mechanism.

Belongs to the short-chain dehydrogenases/reductases (SDR) family.

This is an uncharacterized protein from Bacillus subtilis (strain 168).